Reading from the N-terminus, the 118-residue chain is Large ribosomal subunit protein bL20 (118 aa).

Belongs to the bacterial ribosomal protein bL20 family.

In terms of biological role, binds directly to 23S ribosomal RNA and is necessary for the in vitro assembly process of the 50S ribosomal subunit. It is not involved in the protein synthesizing functions of that subunit. The sequence is that of Large ribosomal subunit protein bL20 from Yersinia pseudotuberculosis serotype O:1b (strain IP 31758).